Here is a 331-residue protein sequence, read N- to C-terminus: Glucokinase (331 aa).

Position 16–21 (16–21 (GDIGGT)) interacts with ATP.

The protein belongs to the bacterial glucokinase family.

It localises to the cytoplasm. The enzyme catalyses D-glucose + ATP = D-glucose 6-phosphate + ADP + H(+). The sequence is that of Glucokinase from Pseudomonas aeruginosa (strain LESB58).